The following is an 87-amino-acid chain: Potassium channel toxin Tdi-beta-KTx (87 aa).

A signal peptide spans 1 to 19; the sequence is MERKLALLLLLGMITLASS. Residues 20–27 constitute a propeptide that is removed on maturation; the sequence is GLREKHVQ. The 35-residue stretch at 53–87 folds into the BetaSPN-type CS-alpha/beta domain; the sequence is QFGCPAYEGYCMNHCQDIERHDGSCHGFKCKCEKS. Intrachain disulfides connect C56/C77, C63/C82, and C67/C84.

In terms of tissue distribution, expressed by the venom gland.

Its subcellular location is the secreted. Its function is as follows. Inhibits voltage-gated potassium channel. This Tityus discrepans (Venezuelan scorpion) protein is Potassium channel toxin Tdi-beta-KTx.